The primary structure comprises 256 residues: Type III pantothenate kinase (256 aa).

6–13 (DVGNSHIY) lines the ATP pocket. Residues tyrosine 99 and 106–109 (GADR) contribute to the substrate site. The active-site Proton acceptor is aspartate 108. Position 129 (aspartate 129) interacts with K(+). An ATP-binding site is contributed by threonine 132. Residue threonine 184 participates in substrate binding.

Belongs to the type III pantothenate kinase family. As to quaternary structure, homodimer. NH4(+) is required as a cofactor. K(+) serves as cofactor.

The protein resides in the cytoplasm. It carries out the reaction (R)-pantothenate + ATP = (R)-4'-phosphopantothenate + ADP + H(+). It functions in the pathway cofactor biosynthesis; coenzyme A biosynthesis; CoA from (R)-pantothenate: step 1/5. In terms of biological role, catalyzes the phosphorylation of pantothenate (Pan), the first step in CoA biosynthesis. This chain is Type III pantothenate kinase, found in Legionella pneumophila (strain Paris).